The primary structure comprises 686 residues: Amphiphysin (686 aa).

2 coiled-coil regions span residues 10–83 (AKNV…SLHE) and 144–191 (DYDS…QEEL). Positions 24-240 (VLQKLGKADE…MTKLGDQHAD (217 aa)) constitute a BAR domain. Disordered stretches follow at residues 244–314 (SIQG…PTKE), 421–441 (AETEQALPTEPQAEEPPATAA), and 483–597 (VEEA…AGAV). Position 252 is a phosphoserine (serine 252). Threonine 260 is subject to Phosphothreonine. Positions 261 to 274 (PSPPEEPSPLPSPT) are enriched in pro residues. 4 positions are modified to phosphoserine: serine 262, serine 268, serine 272, and serine 276. The residue at position 280 (threonine 280) is a Phosphothreonine. The segment covering 424-441 (EQALPTEPQAEEPPATAA) has biased composition (low complexity). Phosphoserine is present on serine 500. Positions 541 to 562 (SNHEGEGEHQETATGTEPREAA) are enriched in basic and acidic residues. An SH3 domain is found at 613–686 (GFLYKVETLH…FPENFTRRLE (74 aa)). Serine 629 carries the post-translational modification Phosphoserine.

Heterodimer with BIN1. Binds SH3GLB1. Interacts with REPS1 and SGIP1. Binds AP2A2. Interacts with AP2B1. Interacts with DNM1 and SYNJ1.

Its subcellular location is the cytoplasmic vesicle. It is found in the secretory vesicle. The protein localises to the synaptic vesicle membrane. It localises to the cytoplasm. The protein resides in the cytoskeleton. Its function is as follows. May participate in mechanisms of regulated exocytosis in synapses and certain endocrine cell types. May control the properties of the membrane associated cytoskeleton. In Mus musculus (Mouse), this protein is Amphiphysin (Amph).